Reading from the N-terminus, the 1081-residue chain is Carbamoyl phosphate synthase large chain (1081 aa).

The carboxyphosphate synthetic domain stretch occupies residues 1 to 410; sequence MPKRTDIKTI…SFQKALRGLE (410 aa). ATP-binding residues include R129, R176, G182, G183, E215, L217, E222, G248, I249, H250, Q292, and E306. The 203-residue stretch at 133–335 folds into the ATP-grasp 1 domain; sequence KEAMTKIGLG…IAKVAAKLAV (203 aa). Mg(2+)-binding residues include Q292, E306, and N308. Positions 292, 306, and 308 each coordinate Mn(2+). The oligomerization domain stretch occupies residues 411 to 558; sequence VGVDGLDEKS…YEAEHGECEA (148 aa). A carbamoyl phosphate synthetic domain region spans residues 559–944; that stretch reads DPTERKKIMV…ALFKSQLAAG (386 aa). Positions 683–878 constitute an ATP-grasp 2 domain; sequence QKLLHDLGLR…LAKVAARCMA (196 aa). ATP contacts are provided by R719, R758, L760, E765, G790, V791, H792, S793, Q833, and E849. Positions 833, 849, and 851 each coordinate Mg(2+). Mn(2+)-binding residues include Q833, E849, and N851. Residues 945–1081 form the MGS-like domain; sequence SRLPEKGTVL…YDLQGLHASL (137 aa). The interval 945 to 1081 is allosteric domain; that stretch reads SRLPEKGTVL…YDLQGLHASL (137 aa).

It belongs to the CarB family. In terms of assembly, composed of two chains; the small (or glutamine) chain promotes the hydrolysis of glutamine to ammonia, which is used by the large (or ammonia) chain to synthesize carbamoyl phosphate. Tetramer of heterodimers (alpha,beta)4. Mg(2+) serves as cofactor. It depends on Mn(2+) as a cofactor.

The catalysed reaction is hydrogencarbonate + L-glutamine + 2 ATP + H2O = carbamoyl phosphate + L-glutamate + 2 ADP + phosphate + 2 H(+). It catalyses the reaction hydrogencarbonate + NH4(+) + 2 ATP = carbamoyl phosphate + 2 ADP + phosphate + 2 H(+). It participates in amino-acid biosynthesis; L-arginine biosynthesis; carbamoyl phosphate from bicarbonate: step 1/1. The protein operates within pyrimidine metabolism; UMP biosynthesis via de novo pathway; (S)-dihydroorotate from bicarbonate: step 1/3. Functionally, large subunit of the glutamine-dependent carbamoyl phosphate synthetase (CPSase). CPSase catalyzes the formation of carbamoyl phosphate from the ammonia moiety of glutamine, carbonate, and phosphate donated by ATP, constituting the first step of 2 biosynthetic pathways, one leading to arginine and/or urea and the other to pyrimidine nucleotides. The large subunit (synthetase) binds the substrates ammonia (free or transferred from glutamine from the small subunit), hydrogencarbonate and ATP and carries out an ATP-coupled ligase reaction, activating hydrogencarbonate by forming carboxy phosphate which reacts with ammonia to form carbamoyl phosphate. This chain is Carbamoyl phosphate synthase large chain, found in Ralstonia nicotianae (strain ATCC BAA-1114 / GMI1000) (Ralstonia solanacearum).